Reading from the N-terminus, the 358-residue chain is tRNA-specific 2-thiouridylase MnmA (358 aa).

ATP-binding positions include 7–14 (AMSGGVDS) and leucine 33. Cysteine 101 functions as the Nucleophile in the catalytic mechanism. Cysteine 101 and cysteine 197 are oxidised to a cystine. Glycine 125 is a binding site for ATP. The tract at residues 147-149 (KDQ) is interaction with tRNA. Residue cysteine 197 is the Cysteine persulfide intermediate of the active site.

It belongs to the MnmA/TRMU family.

The protein localises to the cytoplasm. It carries out the reaction S-sulfanyl-L-cysteinyl-[protein] + uridine(34) in tRNA + AH2 + ATP = 2-thiouridine(34) in tRNA + L-cysteinyl-[protein] + A + AMP + diphosphate + H(+). Its function is as follows. Catalyzes the 2-thiolation of uridine at the wobble position (U34) of tRNA, leading to the formation of s(2)U34. In Rickettsia typhi (strain ATCC VR-144 / Wilmington), this protein is tRNA-specific 2-thiouridylase MnmA.